The sequence spans 106 residues: Putative membrane protein insertion efficiency factor (106 aa).

Belongs to the UPF0161 family.

The protein localises to the cell inner membrane. Could be involved in insertion of integral membrane proteins into the membrane. This chain is Putative membrane protein insertion efficiency factor, found in Acinetobacter baumannii (strain AB307-0294).